The chain runs to 344 residues: MAGSEEVNLIESKTVVPLNTWVLISNFKLAYNLLRRPDGTFNRHLAEFLDRKVPANANPVNGVFSFDVIIDRQTNLLSRVYRPADAGTSPSITDLQNPVDGEIVPVIVFFHGGSFAHSSANSAIYDTLCRRLVGLCGAVVVSVNYRRAPENRYPCAYDDGWAVLKWVNSSSWLRSKKDSKVRIFLAGDSSGGNIVHNVAVRAVESRIDVLGNILLNPMFGGTERTESEKRLDGKYFVTVRDRDWYWRAFLPEGEDREHPACSPFGPRSKSLEGLSFPKSLVVVAGLDLIQDWQLKYAEGLKKAGQEVKLLYLEQATIGFYLLPNNNHFHTVMDEIAAFVNAECQ.

Ala-2 carries the N-acetylalanine modification. The Involved in the stabilization of the negatively charged intermediate by the formation of the oxyanion hole motif lies at 111–113 (HGG). Residues 113-114 (GS), Tyr-125, and Ser-189 contribute to the gibberellin A4 site. Residues Ser-114, Tyr-125, Ser-189, and Phe-236 each contribute to the gibberellin A3 site. Ser-189 is an active-site residue. Residue Asp-287 is part of the active site. A gibberellin A4-binding site is contributed by Gly-318. Residue Gly-318 coordinates gibberellin A3.

The protein belongs to the 'GDXG' lipolytic enzyme family. Interacts with the DELLA proteins GAI, RGA, RGL1, RGL2 and RGL3 in a GA-dependent manner. In terms of tissue distribution, widely expressed.

Its subcellular location is the nucleus. In terms of biological role, functions as a soluble gibberellin (GA) receptor. GA is an essential hormone that regulates growth and development in plants. Binds with high affinity the biologically active gibberellin GA4, but has no affinity for the biologically inactive GAs. In response to GA, interacts with specific DELLA proteins, known as repressors of GA-induced growth, and targets them for degradation via proteasome. Seems to be required for GA signaling that controls root growth, seed germination and stem elongation. Partially redundant with GID1A and GID1B. This Arabidopsis thaliana (Mouse-ear cress) protein is Gibberellin receptor GID1C (GID1C).